The sequence spans 126 residues: Holo-[acyl-carrier-protein] synthase (126 aa).

The Mg(2+) site is built by D9 and E58.

The protein belongs to the P-Pant transferase superfamily. AcpS family. Mg(2+) is required as a cofactor.

It localises to the cytoplasm. It catalyses the reaction apo-[ACP] + CoA = holo-[ACP] + adenosine 3',5'-bisphosphate + H(+). Functionally, transfers the 4'-phosphopantetheine moiety from coenzyme A to a Ser of acyl-carrier-protein. This chain is Holo-[acyl-carrier-protein] synthase, found in Escherichia coli (strain ATCC 8739 / DSM 1576 / NBRC 3972 / NCIMB 8545 / WDCM 00012 / Crooks).